Consider the following 151-residue polypeptide: 3-hydroxyacyl-[acyl-carrier-protein] dehydratase FabZ (151 aa).

Residue H54 is part of the active site.

This sequence belongs to the thioester dehydratase family. FabZ subfamily.

It localises to the cytoplasm. It carries out the reaction a (3R)-hydroxyacyl-[ACP] = a (2E)-enoyl-[ACP] + H2O. Its function is as follows. Involved in unsaturated fatty acids biosynthesis. Catalyzes the dehydration of short chain beta-hydroxyacyl-ACPs and long chain saturated and unsaturated beta-hydroxyacyl-ACPs. This chain is 3-hydroxyacyl-[acyl-carrier-protein] dehydratase FabZ, found in Klebsiella pneumoniae (strain 342).